Here is a 4834-residue protein sequence, read N- to C-terminus: E3 ubiquitin-protein ligase HERC2 (4834 aa).

The segment at 50–88 (TESTQNGELPPRKDDSVEPSGTKKEDLNDKEKKDEEETP) is disordered. Residues 59–84 (PPRKDDSVEPSGTKKEDLNDKEKKDE) are compositionally biased toward basic and acidic residues. Threonine 272 is modified (phosphothreonine). An RCC1 1-1 repeat occupies 415–461 (PTSHKGSLQEVIGWGLIGWKYYANVIGPIQCEGLANLGVTQIACAEK). One copy of the RCC1 1-2 repeat lies at 462 to 512 (RFLILSRNGRVYTQAYNSDTLAPQLVQGLASRNIVKIAAHSDGHHYLALAA). Residues 513-568 (TGEVYSWGCGDGGRLGHGDTVPLEEPKVISAFSGKQAGKHVVHIACGSTYSAAITA) form an RCC1 1-3 repeat. The stretch at 569 to 620 (EGELYTWGRGNYGRLGHGSSEDEAIPMLVAGLKGLKVIDVACGSGDAQTLAV) is one RCC1 1-4 repeat. Residues 623-674 (NGQVWSWGDGDYGKLGRGGSDGCKTPKLIEKLQDLDVVKVRCGSQFSIALTK) form an RCC1 1-5 repeat. Threonine 647 is modified (phosphothreonine). The stretch at 675–726 (DGQVYSWGKGDNQRLGHGTEEHVRYPKLLEGLQGKKVIDVAAGSTHCLALTE) is one RCC1 1-6 repeat. The RCC1 1-7 repeat unit spans residues 728-778 (SEVHSWGSNDQCQHFDTLRVTKPEPAALPGLDTKHIVGIACGPAQSFAWSS). Positions 948–980 (LHAAITAEIQDIEAKKEAQKEKEIDEQEANAST) form a coiled coil. The 77-residue stretch at 1207 to 1283 (VTLIRKADLE…MHAFCVGQYL (77 aa)) folds into the Cytochrome b5 heme-binding domain. The interval 1555–1575 (RKKRVPKKPESTDDEEKIGNE) is disordered. Positions 1566–1575 (TDDEEKIGNE) are enriched in acidic residues. Serine 1577 carries the post-translational modification Phosphoserine. One can recognise an MIB/HERC2 domain in the interval 1859–1932 (SGPELAAMMK…KYDLKLAELP (74 aa)). The segment at 1933–1958 (AAAQPSAEDSDTEDDSEAEQTERNIH) is disordered. The span at 1940–1951 (EDSDTEDDSEAE) shows a compositional bias: acidic residues. Position 1942 is a phosphoserine (serine 1942). Position 1944 is a phosphothreonine (threonine 1944). The residue at position 2454 (serine 2454) is a Phosphoserine. In terms of domain architecture, CPH spans 2554–2630 (RADFLSNDDY…RYIHVELIGY (77 aa)). Residues 2703–2755 (HPGVTCDGCQMFPINGSRFKCRNCDDFDFCETCFKTKKHNTRHTFGRINEPGQ) form a ZZ-type zinc finger. Positions 2708, 2711, 2723, 2726, 2732, 2735, 2741, and 2745 each coordinate Zn(2+). The region spanning 2759–2936 (FCGRSGKQLK…ASDNEEEEDE (178 aa)) is the DOC domain. Position 2928 is a phosphoserine (serine 2928). Residues 2958 to 3009 (RTKVFVWGLNDKDQLGGLKGSKIKVPSFSETLSALNVVQVAGGSKSLFAVTV) form an RCC1 2-1 repeat. The stretch at 3010–3064 (EGKVYACGEATNGRLGLGISSGTVPIPRQITALSSYVVKKVAVHSGGRHATALTV) is one RCC1 2-2 repeat. The stretch at 3065–3116 (DGKVFSWGEGDDGKLGHFSRMNCDKPRLIEALKTKRIRDIACGSSHSAALTS) is one RCC1 2-3 repeat. An RCC1 2-4 repeat occupies 3118-3168 (GELYTWGLGEYGRLGHGDNTTQLKPKMVKVLLGHRVIQVACGSRDAQTLAL). One copy of the RCC1 2-5 repeat lies at 3171–3222 (EGLVFSWGDGDFGKLGRGGSEGCNIPQNIERLNGQGVCQIECGAQFSLALTK). Residues 3224-3274 (GVVWTWGKGDYFRLGHGSDVHVRKPQVVEGLRGKKIVHVAVGALHCLAVTD) form an RCC1 2-6 repeat. An RCC1 2-7 repeat occupies 3275–3326 (SGQVYAWGDNDHGQQGNGTTTVNRKPTLVQGLEGQKITRVACGSSHSVAWTT). Polar residues-rich tracts occupy residues 3602–3611 (SQSGRLSSQP) and 3618–3629 (HPYTDDTSTSGT). A disordered region spans residues 3602–3629 (SQSGRLSSQPVVVESSHPYTDDTSTSGT). The stretch at 3951 to 4002 (SGTIYGWGHNHRGQLGGIEGAKVKVPTPCEALATLRPVQLIGGEQTLFAVTA) is one RCC1 3-1 repeat. The RCC1 3-2 repeat unit spans residues 4004–4056 (GKLYATGYGAGGRLGIGGTESVSTPTLLESIQHVFIKKVAVNSGGKHCLALSS). An RCC1 3-3 repeat occupies 4058 to 4108 (GEVYSWGEAEDGKLGHGNRSPCDRPRVIESLRGIEVVDVAAGGAHSACVTA). The stretch at 4110 to 4162 (GDLYTWGKGRYGRLGHSDSEDQLKPKLVEALQGHRVVDIACGSGDAQTLCLTD) is one RCC1 3-4 repeat. The RCC1 3-5 repeat unit spans residues 4164–4214 (DTVWSWGDGDYGKLGRGGSDGCKVPMKIDSLTGLGVVKVECGSQFSVALTK). One copy of the RCC1 3-6 repeat lies at 4216-4266 (GAVYTWGKGDYHRLGHGSDDHVRRPRQVQGLQGKKVIAIATGSLHCVCCTE). An RCC1 3-7 repeat occupies 4268–4318 (GEVYTWGDNDEGQLGDGTTNAIQRPRLVAALQGKKVNRVACGSAHTLAWST). One can recognise an HECT domain in the interval 4457–4794 (DSLLLPHRVW…IHFCKSIDTD (338 aa)). The active-site Glycyl thioester intermediate is cysteine 4762. The segment at 4804–4834 (EPAADDSSDDSDNEDVDSFASDSTQDYLTGH) is disordered. Positions 4806–4820 (AADDSSDDSDNEDVD) are enriched in acidic residues. Phosphoserine occurs at positions 4810, 4811, and 4814. Residues 4823–4834 (ASDSTQDYLTGH) are compositionally biased toward polar residues. Threonine 4827 carries the phosphothreonine modification.

As to quaternary structure, interacts (when phosphorylated at Thr-4827 and sumoylated) with RNF8 (via FHA domain); this interaction increases after ionizing radiation (IR) treatment. Interacts with XPA. Interacts with NEURL4. Via its interaction with NEURL4, may indirectly interact with CCP110 and CEP97. In terms of processing, phosphorylation at Thr-4827 is required for interaction with RNF8. Post-translationally, sumoylated with SUMO1 by PIAS4 in response to double-strand breaks (DSBs), promoting the interaction with RNF8.

Its subcellular location is the cytoplasm. The protein localises to the cytoskeleton. It localises to the microtubule organizing center. It is found in the centrosome. The protein resides in the centriole. Its subcellular location is the nucleus. The catalysed reaction is S-ubiquitinyl-[E2 ubiquitin-conjugating enzyme]-L-cysteine + [acceptor protein]-L-lysine = [E2 ubiquitin-conjugating enzyme]-L-cysteine + N(6)-ubiquitinyl-[acceptor protein]-L-lysine.. It functions in the pathway protein modification; protein ubiquitination. Its function is as follows. E3 ubiquitin-protein ligase that regulates ubiquitin-dependent retention of repair proteins on damaged chromosomes. Recruited to sites of DNA damage in response to ionizing radiation (IR) and facilitates the assembly of UBE2N and RNF8 promoting DNA damage-induced formation of 'Lys-63'-linked ubiquitin chains. Acts as a mediator of binding specificity between UBE2N and RNF8. Involved in the maintenance of RNF168 levels. E3 ubiquitin-protein ligase that promotes the ubiquitination and proteasomal degradation of XPA which influences the circadian oscillation of DNA excision repair activity. By controlling the steady-state expression of the IGF1R receptor, indirectly regulates the insulin-like growth factor receptor signaling pathway. Also modulates iron metabolism by regulating the basal turnover of FBXL5. This chain is E3 ubiquitin-protein ligase HERC2, found in Homo sapiens (Human).